A 457-amino-acid chain; its full sequence is Siroheme synthase (457 aa).

The precorrin-2 dehydrogenase /sirohydrochlorin ferrochelatase stretch occupies residues 1–204 (MDHLPIFCQL…NDQKAITETT (204 aa)). NAD(+) contacts are provided by residues 22 to 23 (DV) and 43 to 44 (LA). A Phosphoserine modification is found at Ser128. The interval 216–457 (GEVVLVGAGP…RDKLNWFSNH (242 aa)) is uroporphyrinogen-III C-methyltransferase. Pro225 is a binding site for S-adenosyl-L-methionine. Residue Asp248 is the Proton acceptor of the active site. Lys270 serves as the catalytic Proton donor. Residues 301-303 (GGD), Ile306, 331-332 (TA), Met382, and Gly411 contribute to the S-adenosyl-L-methionine site.

This sequence in the N-terminal section; belongs to the precorrin-2 dehydrogenase / sirohydrochlorin ferrochelatase family. The protein in the C-terminal section; belongs to the precorrin methyltransferase family.

It catalyses the reaction uroporphyrinogen III + 2 S-adenosyl-L-methionine = precorrin-2 + 2 S-adenosyl-L-homocysteine + H(+). The catalysed reaction is precorrin-2 + NAD(+) = sirohydrochlorin + NADH + 2 H(+). It carries out the reaction siroheme + 2 H(+) = sirohydrochlorin + Fe(2+). Its pathway is cofactor biosynthesis; adenosylcobalamin biosynthesis; precorrin-2 from uroporphyrinogen III: step 1/1. The protein operates within cofactor biosynthesis; adenosylcobalamin biosynthesis; sirohydrochlorin from precorrin-2: step 1/1. It functions in the pathway porphyrin-containing compound metabolism; siroheme biosynthesis; precorrin-2 from uroporphyrinogen III: step 1/1. It participates in porphyrin-containing compound metabolism; siroheme biosynthesis; siroheme from sirohydrochlorin: step 1/1. Its pathway is porphyrin-containing compound metabolism; siroheme biosynthesis; sirohydrochlorin from precorrin-2: step 1/1. Multifunctional enzyme that catalyzes the SAM-dependent methylations of uroporphyrinogen III at position C-2 and C-7 to form precorrin-2 via precorrin-1. Then it catalyzes the NAD-dependent ring dehydrogenation of precorrin-2 to yield sirohydrochlorin. Finally, it catalyzes the ferrochelation of sirohydrochlorin to yield siroheme. This Escherichia fergusonii (strain ATCC 35469 / DSM 13698 / CCUG 18766 / IAM 14443 / JCM 21226 / LMG 7866 / NBRC 102419 / NCTC 12128 / CDC 0568-73) protein is Siroheme synthase.